Consider the following 184-residue polypeptide: Oligoribonuclease (184 aa).

The region spanning 7-170 is the Exonuclease domain; that stretch reads LIWIDLEMTG…DDIRESVAEL (164 aa). Tyr-128 is an active-site residue.

The protein belongs to the oligoribonuclease family.

It is found in the cytoplasm. In terms of biological role, 3'-to-5' exoribonuclease specific for small oligoribonucleotides. In Baumannia cicadellinicola subsp. Homalodisca coagulata, this protein is Oligoribonuclease.